The primary structure comprises 111 residues: ATP-dependent Clp protease adapter protein ClpS (111 aa).

It belongs to the ClpS family. As to quaternary structure, binds to the N-terminal domain of the chaperone ClpA.

Functionally, involved in the modulation of the specificity of the ClpAP-mediated ATP-dependent protein degradation. The polypeptide is ATP-dependent Clp protease adapter protein ClpS (Corynebacterium aurimucosum (strain ATCC 700975 / DSM 44827 / CIP 107346 / CN-1) (Corynebacterium nigricans)).